The sequence spans 242 residues: Neuromodulin (242 aa).

The disordered stretch occupies residues 1–242; the sequence is MLCCMRRTKQ…EEREADQEHA (242 aa). Residues Cys-3 and Cys-4 are each lipidated (S-palmitoyl cysteine). Residues 9-32 show a composition bias toward basic and acidic residues; sequence KQVEKNDEDQKIEQDGIKPEDKAH. In terms of domain architecture, IQ spans 31 to 60; that stretch reads AHKAATKIQASFRGHITRKKLKGEKKGDAQ. Phosphoserine; by PHK and PKC is present on Ser-41. 2 stretches are compositionally biased toward basic and acidic residues: residues 66-84 and 98-117; these read GNEK…KEGE and KAEE…KGEG. Polar residues predominate over residues 142–157; sequence ETESATKASTDNSPSS. Phosphoserine is present on residues Ser-154, Ser-156, and Ser-157. Positions 158-170 are enriched in basic and acidic residues; that stretch reads KAEDAPAKEEPKQ. Residues 171–203 show a composition bias toward low complexity; the sequence is ADVPAAVTAAAAATTPAAEDAAAKATAQPPTDA. Thr-185 bears the Phosphothreonine mark. Ser-206 and Ser-207 each carry phosphoserine; by CK2. A compositionally biased stretch (basic and acidic residues) spans 209 to 242; it reads AEEKIEAVDETKPKESARQDEGKGEEREADQEHA.

The protein belongs to the neuromodulin family. Identified in a complex containing FGFR4, NCAM1, CDH2, PLCG1, FRS2, SRC, SHC1, GAP43 and CTTN. Interacts (via IQ domain) with calmodulin. Binds calmodulin with a greater affinity in the absence of Ca(2+) than in its presence. Phosphorylated. Phosphorylation of this protein by a protein kinase C is specifically correlated with certain forms of synaptic plasticity. In terms of processing, palmitoylated by ZDHHC3. Palmitoylation is regulated by ARF6 and is essential for plasma membrane association and axonal and dendritic filopodia induction. Deacylated by LYPLA2.

The protein localises to the cell membrane. Its subcellular location is the cell projection. It is found in the growth cone membrane. The protein resides in the synapse. It localises to the filopodium membrane. The protein localises to the perikaryon. Its subcellular location is the dendrite. It is found in the axon. The protein resides in the cytoplasm. In terms of biological role, this protein is associated with nerve growth. It is a major component of the motile 'growth cones' that form the tips of elongating axons. Plays a role in axonal and dendritic filopodia induction. The chain is Neuromodulin (GAP43) from Felis catus (Cat).